The following is a 357-amino-acid chain: Arginine kinase Scy p 2.0101 (357 aa).

The Phosphagen kinase N-terminal domain maps to 9 to 91 (KLEEGFKKLE…FDPIIEDYHK (83 aa)). 64–68 (GVGVY) is an L-arginine binding site. 2 igE-binding and beta-hexosaminidase release from rat basophilic leukemia (RBL) cells regions span residues 113–127 (VDPD…RVRC) and 127–155 (CGRS…VSST). The region spanning 119 to 356 (FVISTRVRCG…LELIKIEKEM (238 aa)) is the Phosphagen kinase C-terminal domain. Residue 122-126 (STRVR) participates in ATP binding. Residue H185 participates in ATP binding. C201 and C271 are joined by a disulfide. Residues 204 to 218 (WPTGRGIYHNDNKTF) are igE-binding and beta-hexosaminidase release from rat basophilic leukemia (RBL) cells. Residues 211–225 (YHNDNKTFLVWCNEE) are igE-binding, but no beta-hexosaminidase release from rat basophilic leukemia (RBL) cells. E225 is an L-arginine binding site. R229 lines the ATP pocket. C271 is a binding site for L-arginine. ATP contacts are provided by residues 280 to 284 (RASVH) and 309 to 314 (RGTRGE). E314 is a binding site for L-arginine. Positions 316–330 (TEAEGGVYDISNKRR) are igE-binding, but no beta-hexosaminidase release from rat basophilic leukemia (RBL) cells.

Belongs to the ATP:guanido phosphotransferase family. Glycosylated. As to expression, muscle (at protein level).

It carries out the reaction L-arginine + ATP = N(omega)-phospho-L-arginine + ADP + H(+). Functionally, catalyzes the reversible transfer of high energy ATP gamma-phosphate group to L-arginine. The sequence is that of Arginine kinase Scy p 2.0101 from Scylla paramamosain (Mud crab).